The following is a 277-amino-acid chain: 2-dehydro-3-deoxyphosphooctonate aldolase (277 aa).

Belongs to the KdsA family.

Its subcellular location is the cytoplasm. It catalyses the reaction D-arabinose 5-phosphate + phosphoenolpyruvate + H2O = 3-deoxy-alpha-D-manno-2-octulosonate-8-phosphate + phosphate. It functions in the pathway carbohydrate biosynthesis; 3-deoxy-D-manno-octulosonate biosynthesis; 3-deoxy-D-manno-octulosonate from D-ribulose 5-phosphate: step 2/3. Its pathway is bacterial outer membrane biogenesis; lipopolysaccharide biosynthesis. The polypeptide is 2-dehydro-3-deoxyphosphooctonate aldolase (Brucella anthropi (strain ATCC 49188 / DSM 6882 / CCUG 24695 / JCM 21032 / LMG 3331 / NBRC 15819 / NCTC 12168 / Alc 37) (Ochrobactrum anthropi)).